The following is a 449-amino-acid chain: MYLVAGLGLTGQSVLNYFASQGEPCYALDTRPEFDTSELEKAYPDVAFATGTLPTQWCGKIDSIVLSPGIAKSEPWVKHCINQGTEVIGDIELFARAAGKPIVAITGSNGKSTVTTLVAEALKEAGYAVGVGGNIGCPALDLLTHPTEFDVYVLELSSFQLETTYSLQTIAATVLNISEDHMDRYLALEDYIQAKMTILNNTELAVLPLDFERVGIARPGDEVRFGLNYAEALPPKEYGIVMKNGQAWLGWEDHASVPVTAMAQQGLHHQLNALAMMALCRPFDLSDAVFEKVLKTFKGLPHRTQVVLEQEGVRWINDSKGTNVGATVTAIESIKETLDGQVILIAGGVGKEADFNELGQAVVQSCRQAILFGQDKAIIAQQLPQEKIQLVDTLSEAVLLAKTIAKSGDAVLFSPACASFDQFKNYIERGNAFEAFVQQFIANEVGGKS.

107 to 113 serves as a coordination point for ATP; that stretch reads GSNGKST.

This sequence belongs to the MurCDEF family.

The protein resides in the cytoplasm. The catalysed reaction is UDP-N-acetyl-alpha-D-muramoyl-L-alanine + D-glutamate + ATP = UDP-N-acetyl-alpha-D-muramoyl-L-alanyl-D-glutamate + ADP + phosphate + H(+). It participates in cell wall biogenesis; peptidoglycan biosynthesis. Functionally, cell wall formation. Catalyzes the addition of glutamate to the nucleotide precursor UDP-N-acetylmuramoyl-L-alanine (UMA). The protein is UDP-N-acetylmuramoylalanine--D-glutamate ligase of Hydrogenovibrio crunogenus (strain DSM 25203 / XCL-2) (Thiomicrospira crunogena).